The primary structure comprises 491 residues: Ketol-acid reductoisomerase (NADP(+)) (491 aa).

The KARI N-terminal Rossmann domain occupies 15–208 (AQLGKCRFMG…GGHRAGVLES (194 aa)). NADP(+) contacts are provided by residues 45-48 (CGAQ), arginine 68, arginine 76, serine 78, and 108-110 (DKQ). Residue histidine 132 is part of the active site. Glycine 158 is an NADP(+) binding site. KARI C-terminal knotted domains lie at 209–344 (SFVA…TAPQ) and 345–484 (YEGK…MTDM). The Mg(2+) site is built by aspartate 217, glutamate 221, glutamate 389, and glutamate 393. Serine 414 serves as a coordination point for substrate.

This sequence belongs to the ketol-acid reductoisomerase family. Mg(2+) serves as cofactor.

The catalysed reaction is (2R)-2,3-dihydroxy-3-methylbutanoate + NADP(+) = (2S)-2-acetolactate + NADPH + H(+). It carries out the reaction (2R,3R)-2,3-dihydroxy-3-methylpentanoate + NADP(+) = (S)-2-ethyl-2-hydroxy-3-oxobutanoate + NADPH + H(+). Its pathway is amino-acid biosynthesis; L-isoleucine biosynthesis; L-isoleucine from 2-oxobutanoate: step 2/4. The protein operates within amino-acid biosynthesis; L-valine biosynthesis; L-valine from pyruvate: step 2/4. Its function is as follows. Involved in the biosynthesis of branched-chain amino acids (BCAA). Catalyzes an alkyl-migration followed by a ketol-acid reduction of (S)-2-acetolactate (S2AL) to yield (R)-2,3-dihydroxy-isovalerate. In the isomerase reaction, S2AL is rearranged via a Mg-dependent methyl migration to produce 3-hydroxy-3-methyl-2-ketobutyrate (HMKB). In the reductase reaction, this 2-ketoacid undergoes a metal-dependent reduction by NADPH to yield (R)-2,3-dihydroxy-isovalerate. The chain is Ketol-acid reductoisomerase (NADP(+)) from Escherichia coli (strain UTI89 / UPEC).